The following is a 429-amino-acid chain: Glutamate-1-semialdehyde 2,1-aminomutase 2 (429 aa).

At K268 the chain carries N6-(pyridoxal phosphate)lysine.

This sequence belongs to the class-III pyridoxal-phosphate-dependent aminotransferase family. HemL subfamily. In terms of assembly, homodimer. Pyridoxal 5'-phosphate serves as cofactor.

It is found in the cytoplasm. It carries out the reaction (S)-4-amino-5-oxopentanoate = 5-aminolevulinate. It functions in the pathway porphyrin-containing compound metabolism; protoporphyrin-IX biosynthesis; 5-aminolevulinate from L-glutamyl-tRNA(Glu): step 2/2. The protein is Glutamate-1-semialdehyde 2,1-aminomutase 2 of Bacillus velezensis (strain DSM 23117 / BGSC 10A6 / LMG 26770 / FZB42) (Bacillus amyloliquefaciens subsp. plantarum).